We begin with the raw amino-acid sequence, 577 residues long: MSIVELFHYSLFLGLFVAFTYNKKEPPAFGAALAFWCILLSFLGLLFCHISNNNSNYNVLTANAPFFYQISGTWSNHEGSILLWCWILSFYGFLLCYRGRPQSHNVSKRGGYRETFFYFFVLNFVKNFILSLLCYEQKTLAVPQLYTPFVLRTLVDSELCSRRNRTFDGPALFYAPLYPERKMSFAFLGARLPVVRGEGKRTYLLLHLARDDKERASSIDEQRIDGALGIALFFSFFLLASSDFFVRNFFVCTEPLAELNPVLQDPILAIHPPCIYAGDVASAMGFCLCRSKMMNGIVALHSPPMWKDAAEKNGRLLCSAGCVGFRITSELFTLKFKDVGAKCYPALLLRSNRSPLMLLRRRFFAFSLLWTGALVDTGREQAKRVVRNGKKDTATSPLSWTAGANTVVSDQDQEPIRIWILTCWCFLNVGILLGSWWAYHELGWGGWWFWDPVENASFMPWVLATACIHSVILPLLHSCTLLINIVTFLCCVLGTFSIRSGLLASVHSFATDDTRGIFLWRFFLLMTGISMILFSQMKQQASVRRTYQKEMVVARSTLVHLRHSARAQPRPQLLWKN.

It belongs to the CcmF/CycK/Ccl1/NrfE/CcsA family.

It is found in the mitochondrion. Its function is as follows. Could be involved in assembly and maturation of cytochromes c. May play a role in guidance of apocytochromes and heme groups for the covalent linkage introduced by the cytochrome-c-heme lyase. This Oenothera berteroana (Bertero's evening primrose) protein is Probable cytochrome c biosynthesis protein.